Here is a 447-residue protein sequence, read N- to C-terminus: UPF0210 protein LCK_00974 (447 aa).

The protein belongs to the UPF0210 family. As to quaternary structure, homodimer.

This chain is UPF0210 protein LCK_00974, found in Leuconostoc citreum (strain KM20).